The following is a 581-amino-acid chain: FAD-dependent monooxygenase DEP4 (581 aa).

43–46 (VWSK) contacts FAD. 54 to 56 (FAQ) contributes to the NADP(+) binding site. An FAD-binding site is contributed by V108. Residues 183-202 (VGRS…EGKR), 219-220 (AP), and 351-352 (DI) contribute to the NADP(+) site. M470 is a binding site for FAD.

Belongs to the FAD-binding monooxygenase family. Requires FAD as cofactor.

It functions in the pathway polyketide biosynthesis. In terms of biological role, FAD-dependent monooxygenase; part of the gene cluster that mediates the biosynthesis of depudecin, a highly oxidized eleven-carbon linear polyketide that acts as a histone deacetylase (HDAC) inhibitor and makes a small contribution to pathogenesis. The reducing polyketide synthase DEP5 is the central enzyme in depudecin biosynthesis by yielding the backbone polyketide chain. The monooxygenases DEP2 and DEP4, as well as the uncharacterized protein DEP1, then act as tailoring enzymes to modify the intermediate polyketide chain into depudecin. In Alternaria brassicicola (Dark leaf spot agent), this protein is FAD-dependent monooxygenase DEP4.